A 471-amino-acid chain; its full sequence is MYELQQHRRFSALDEMLPAFYYCYLLCFPVSSDNRAGTSELLQTSLSSLAEERPYLTGTVRRDMESSVRKGHLILDIPNPFEDLRIVFNDLRGPKSQWKETYQDLKDTGMPPHKLDANLLAPLTAGIGETRKVMSVQANFIHGGLLIAFCFHHNFVDAYGAGRIIARFSEHCNGTVDLKNSADPEGDGTGSRGIADLLDVELLKKQYKFEDLESDPNLWRLNCLEFRGVNDFRWPDFIPALLPVRKPPVISSMFSFSSDALAEIKAMAQPSQSGAWVSTNDALVAFLWRHTMRARFPSSITESEPPNRKSNVVVALDGRKDLSISPTYIGNCLFHCFTDLPINMVGSESTHLGDIAIRVRQTITAARNETLLKAVVGLAATHPDCQAIKYANDNLGPDLYVTSWIDLPFYKLEWGPLGKAEFFRIPDRQFESLCCILPPKDGVVQLITSMEEDHSKRLRSDAEFTRFATHR.

Belongs to the fumigaclavine B O-acetyltransferase family. As to quaternary structure, monomer.

It functions in the pathway sesquiterpene biosynthesis. Functionally, O-acetyltransferase; part of the gene cluster that mediates the biosynthesis of PR-toxin, a bicyclic sesquiterpene belonging to the eremophilane class and acting as a mycotoxin. The first step of the pathway is catalyzed by the aristolochene synthase which performs the cyclization of trans,trans-farnesyl diphosphate (FPP) to the bicyclic sesquiterpene aristolochene. Following the formation of aristolochene, the non-oxygenated aristolochene is converted to the trioxygenated intermediate eremofortin B, via 7-epi-neopetasone. This conversion appears to involve three enzymes, a hydroxysterol oxidase-like enzyme, the quinone-oxidase prx3 that forms the quinone-type-structure in the bicyclic nucleus of aristolochene with the C8-oxo group and the C-3 hydroxyl group, and the P450 monooxygenase prx9 that introduces the epoxide at the double bond between carbons 1 and 2. No monoxy or dioxy-intermediates have been reported to be released to the broth, so these three early oxidative reactions may be coupled together. Eremofortin B is further oxidized by another P450 monooxygenase, that introduces a second epoxide between carbons 7 and 11 prior to acetylation to eremofortin A by the acetyltransferase prx11. The second epoxidation may be performed by a second P450 monooxygenase. After the acetylation step, eremofortin A is converted to eremofortin C and then to PR-toxin. First the conversion of eremofortin A to eremofortin C proceeds by oxidation of the side chain of the molecule at C-12 and is catalyzed by the short-chain oxidoreductase prx1. The cytochrome P450 monooxygenase prx8 also plays a role in this step. The primary alcohol formed at C-12 is finally oxidized by the short-chain alcohol dehydrogenase prx4 that forms PR-toxin. The polypeptide is Eremophilane O-acetyltransferase prx11 (Penicillium rubens (strain ATCC 28089 / DSM 1075 / NRRL 1951 / Wisconsin 54-1255) (Penicillium chrysogenum)).